The primary structure comprises 528 residues: Probable rhamnogalacturonate lyase A (528 aa).

The N-terminal stretch at 1–20 (MLSKATLLLSLPFWARVANA) is a signal peptide. An N-linked (GlcNAc...) asparagine glycan is attached at asparagine 46. Cystine bridges form between cysteine 50-cysteine 93 and cysteine 184-cysteine 193. N-linked (GlcNAc...) asparagine glycosylation occurs at asparagine 351.

This sequence belongs to the polysaccharide lyase 4 family.

It localises to the secreted. It catalyses the reaction Endotype eliminative cleavage of L-alpha-rhamnopyranosyl-(1-&gt;4)-alpha-D-galactopyranosyluronic acid bonds of rhamnogalacturonan I domains in ramified hairy regions of pectin leaving L-rhamnopyranose at the reducing end and 4-deoxy-4,5-unsaturated D-galactopyranosyluronic acid at the non-reducing end.. Pectinolytic enzymes consist of four classes of enzymes: pectin lyase, polygalacturonase, pectin methylesterase and rhamnogalacturonase. Degrades the rhamnogalacturonan I (RG-I) backbone of pectin. The polypeptide is Probable rhamnogalacturonate lyase A (rglA) (Neosartorya fischeri (strain ATCC 1020 / DSM 3700 / CBS 544.65 / FGSC A1164 / JCM 1740 / NRRL 181 / WB 181) (Aspergillus fischerianus)).